We begin with the raw amino-acid sequence, 336 residues long: Galactose/methyl galactoside import permease protein MglC (336 aa).

The next 9 helical transmembrane spans lie at 17–37, 53–73, 107–127, 128–148, 181–201, 227–247, 257–277, 279–299, and 306–326; these read GIYVVLLVLLAIIIFQDPTFL, IIIALGVAGLIVTQGTDLSAG, LVILIVCAIGAVIGLVNGIII, AYLNVTPFITTLGTMIIVYGI, FRLSYITFYALIAVAFVWVLW, VALNLLMIYALSGVFYAFGGL, TNNLGFMYELDAIAACVVGGV, FSGGVGTVFGVVTGVIIFTVI, and IGVNPYWQYIIKGGIIIFAVA.

It belongs to the binding-protein-dependent transport system permease family. AraH/RbsC subfamily. The complex is composed of one ATP-binding protein (MglA), two transmembrane proteins (MglC) and a solute-binding protein (MglB).

It is found in the cell inner membrane. Part of the ABC transporter complex MglABC involved in galactose/methyl galactoside import. Probably responsible for the translocation of the substrate across the membrane. This chain is Galactose/methyl galactoside import permease protein MglC (mglC), found in Salmonella typhimurium (strain LT2 / SGSC1412 / ATCC 700720).